The following is a 142-amino-acid chain: Large ribosomal subunit protein uL11 (142 aa).

It belongs to the universal ribosomal protein uL11 family. In terms of assembly, part of the ribosomal stalk of the 50S ribosomal subunit. Interacts with L10 and the large rRNA to form the base of the stalk. L10 forms an elongated spine to which L12 dimers bind in a sequential fashion forming a multimeric L10(L12)X complex. Post-translationally, one or more lysine residues are methylated.

In terms of biological role, forms part of the ribosomal stalk which helps the ribosome interact with GTP-bound translation factors. This chain is Large ribosomal subunit protein uL11, found in Acinetobacter baylyi (strain ATCC 33305 / BD413 / ADP1).